Reading from the N-terminus, the 315-residue chain is Petrobactin import system permease protein YclO (315 aa).

9 helical membrane passes run 7–27 (IALL…YDLG), 40–60 (VAAI…FQTI), 76–96 (LYML…MVIM), 100–120 (INFI…YQIM), 128–148 (IFFL…LSSF), 172–192 (INTD…VYVW), 223–243 (LIVV…IMFL), 262–282 (YLIA…QFVV), and 288–308 (FSTT…IYLL).

It belongs to the binding-protein-dependent transport system permease family. FecCD subfamily. The complex is composed of two ATP-binding proteins (YclP), two transmembrane proteins (YclN and YclO) and a solute-binding protein (YclQ).

It localises to the cell membrane. Its function is as follows. Part of the ABC transporter complex YclNOPQ involved in uptake of ferric-petrobactin. Petrobactin is a photoreactive 3,4-catecholate siderophore produced by many members of the B.cereus group, including B.anthracis. Probably responsible for the translocation of the substrate across the membrane. The chain is Petrobactin import system permease protein YclO (yclO) from Bacillus subtilis (strain 168).